The chain runs to 470 residues: MNMTGGGAGPQAGPNSSCNIPNSSLLATAPVAATMPIAQLADGWLELESDPGLFTLLLEDFGCHDVQVEEVYDLQKPIESPYGFIFLFRWIEERRARRKIVETTAEIFVKDEEAISSIFFAQQVVPNSCATHALLSVLLNCNENNLQLGDTLSRLKAHTKGMSPENKGLAIGNTPELACAHNSHAMPQARRRLERTGAGVSSCRFTGEAFHFVSFVPINGQLFELDGLKPYPMNHGGWEDHEDWTDKFRRVMTERLGIATGEQDIRFNLMAVVPDRRIAITHKLKMLRTNQAIVSGTLQKLLKADEQGEGGNGDPQRPDTPSTLLEPSAFTARDLQSLLKNLDTEIAINEQHLADENDRRHKFKVDASRRTHNYDKFICTFLSMLAHQGVLGELVSQHLLPSKKISGQSAANRLNKQSNATANAGATAAGAAGAAPKSQQQQAAAAKNGKSPSKTPGRRRKGRNKCKKRK.

Positions 43–274 (GWLELESDPG…IRFNLMAVVP (232 aa)) constitute a UCH catalytic domain. Catalysis depends on Cys-129, which acts as the Nucleophile. Residue His-211 is the Proton donor of the active site. The interval 305–324 (DEQGEGGNGDPQRPDTPSTL) is disordered. The 29-residue stretch at 373–401 (NYDKFICTFLSMLAHQGVLGELVSQHLLP) folds into the ULD domain. Residues 403 to 470 (KKISGQSAAN…KGRNKCKKRK (68 aa)) form a positively charged C-terminal tail required for binding nucleosomes region. The span at 422 to 451 (ANAGATAAGAAGAAPKSQQQQAAAAKNGKS) shows a compositional bias: low complexity. Residues 422–470 (ANAGATAAGAAGAAPKSQQQQAAAAKNGKSPSKTPGRRRKGRNKCKKRK) form a disordered region. Residues 456 to 470 (PGRRRKGRNKCKKRK) are compositionally biased toward basic residues.

It belongs to the peptidase C12 family. BAP1 subfamily. Catalytic component of the polycomb repressive deubiquitinase (PR-DUB) complex, at least composed of caly/calypso, Asx and sba (MBD5/6 homolog). The PR-DUB complex associates with nucleosomes to mediate deubiquitination of histone H2AK118ub1 substrates; the association requires the positively charged C-terminal tail of caly, probably due to direct binding of DNA. Interacts (via ULD domain) with Asx (via DEUBAD domain); the interaction produces a stable heterodimer with a composite binding site for ubiquitin. Homodimerizes (via coiled-coil hinge-region between the UCH and ULD domains) to mediate assembly of 2 copies of the caly-Asx heterodimer into a bisymmetric tetramer; dimerization enhances PR-DUB association with nucleosomes.

It localises to the nucleus. The enzyme catalyses Thiol-dependent hydrolysis of ester, thioester, amide, peptide and isopeptide bonds formed by the C-terminal Gly of ubiquitin (a 76-residue protein attached to proteins as an intracellular targeting signal).. Its function is as follows. Catalytic component of the polycomb repressive deubiquitinase (PR-DUB) complex, a complex that specifically mediates deubiquitination of histone H2A monoubiquitinated at 'Lys-119' (H2AK118ub1). Mediates bisymmetric organization of the PR-DUB complex and is involved in association with nucleosomes to mediate deubiquitination. Does not deubiquitinate monoubiquitinated histone H2B. Required to maintain the transcriptionally repressive state of homeotic genes throughout development. The PR-DUB complex has weak or no activity toward 'Lys-48'- and 'Lys-63'-linked polyubiquitin chains. Polycomb group (PcG) protein. The polypeptide is Ubiquitin carboxyl-terminal hydrolase calypso (Drosophila ananassae (Fruit fly)).